The following is a 190-amino-acid chain: UPF0301 protein PSPTO_5037 (190 aa).

It belongs to the UPF0301 (AlgH) family.

The sequence is that of UPF0301 protein PSPTO_5037 from Pseudomonas syringae pv. tomato (strain ATCC BAA-871 / DC3000).